A 255-amino-acid chain; its full sequence is tRNA (guanine-N(1)-)-methyltransferase (255 aa).

Residues Gly113 and 133-138 (IGDYVL) each bind S-adenosyl-L-methionine.

Belongs to the RNA methyltransferase TrmD family. In terms of assembly, homodimer.

It localises to the cytoplasm. The catalysed reaction is guanosine(37) in tRNA + S-adenosyl-L-methionine = N(1)-methylguanosine(37) in tRNA + S-adenosyl-L-homocysteine + H(+). Specifically methylates guanosine-37 in various tRNAs. This chain is tRNA (guanine-N(1)-)-methyltransferase, found in Salmonella agona (strain SL483).